Consider the following 358-residue polypeptide: Protein-glutamate methylesterase/protein-glutamine glutaminase 1 (358 aa).

A Response regulatory domain is found at 8-125 (RVLIVDDSAV…ARGLEGYAEE (118 aa)). At Asp-59 the chain carries 4-aspartylphosphate. Residues 157 to 352 (PVPGSALRFR…LERVAERLIA (196 aa)) form the CheB-type methylesterase domain. Active-site residues include Ser-177, His-203, and Asp-299.

The protein belongs to the CheB family. In terms of processing, phosphorylated by CheA. Phosphorylation of the N-terminal regulatory domain activates the methylesterase activity.

The protein resides in the cytoplasm. The enzyme catalyses [protein]-L-glutamate 5-O-methyl ester + H2O = L-glutamyl-[protein] + methanol + H(+). It carries out the reaction L-glutaminyl-[protein] + H2O = L-glutamyl-[protein] + NH4(+). Its function is as follows. Involved in chemotaxis. Part of a chemotaxis signal transduction system that modulates chemotaxis in response to various stimuli. Catalyzes the demethylation of specific methylglutamate residues introduced into the chemoreceptors (methyl-accepting chemotaxis proteins or MCP) by CheR. Also mediates the irreversible deamidation of specific glutamine residues to glutamic acid. The chain is Protein-glutamate methylesterase/protein-glutamine glutaminase 1 from Xanthomonas campestris pv. campestris (strain ATCC 33913 / DSM 3586 / NCPPB 528 / LMG 568 / P 25).